A 270-amino-acid polypeptide reads, in one-letter code: 3-phenylpropionate-dihydrodiol/cinnamic acid-dihydrodiol dehydrogenase (270 aa).

NAD(+) is bound at residue 10-34 (FITGGGSGLGLALVERFIEEGAQVA). Ser143 provides a ligand contact to substrate. Residue Tyr156 is the Proton acceptor of the active site.

It belongs to the short-chain dehydrogenases/reductases (SDR) family.

It carries out the reaction 3-(cis-5,6-dihydroxycyclohexa-1,3-dien-1-yl)propanoate + NAD(+) = 3-(2,3-dihydroxyphenyl)propanoate + NADH + H(+). The enzyme catalyses (2E)-3-(cis-5,6-dihydroxycyclohexa-1,3-dien-1-yl)prop-2-enoate + NAD(+) = (2E)-3-(2,3-dihydroxyphenyl)prop-2-enoate + NADH + H(+). The protein operates within aromatic compound metabolism; 3-phenylpropanoate degradation. Its function is as follows. Converts 3-phenylpropionate-dihydrodiol (PP-dihydrodiol) and cinnamic acid-dihydrodiol (CI-dihydrodiol) into 3-(2,3-dihydroxylphenyl)propanoic acid (DHPP) and 2,3-dihydroxicinnamic acid (DHCI), respectively. The polypeptide is 3-phenylpropionate-dihydrodiol/cinnamic acid-dihydrodiol dehydrogenase (Escherichia coli (strain K12 / MC4100 / BW2952)).